The sequence spans 280 residues: Pantothenate synthetase (280 aa).

Residue 30–37 (MGYLHEGH) participates in ATP binding. The active-site Proton donor is His-37. Gln-61 serves as a coordination point for (R)-pantoate. Gln-61 is a binding site for beta-alanine. 147-150 (GQKD) provides a ligand contact to ATP. Position 153 (Gln-153) interacts with (R)-pantoate. Residues Val-176 and 184 to 187 (MSSR) contribute to the ATP site.

This sequence belongs to the pantothenate synthetase family. Homodimer.

The protein localises to the cytoplasm. It catalyses the reaction (R)-pantoate + beta-alanine + ATP = (R)-pantothenate + AMP + diphosphate + H(+). It participates in cofactor biosynthesis; (R)-pantothenate biosynthesis; (R)-pantothenate from (R)-pantoate and beta-alanine: step 1/1. Its function is as follows. Catalyzes the condensation of pantoate with beta-alanine in an ATP-dependent reaction via a pantoyl-adenylate intermediate. This Fervidobacterium nodosum (strain ATCC 35602 / DSM 5306 / Rt17-B1) protein is Pantothenate synthetase.